The chain runs to 367 residues: Histone RNA hairpin-binding protein (367 aa).

Polar residues predominate over residues 1–12 (MAQKTPTKGTRS). 2 disordered regions span residues 1 to 24 (MAQK…SPIK) and 49 to 200 (EVTE…HWEE). A compositionally biased stretch (basic and acidic residues) spans 57–73 (LASRLEEERRCKSESRR). The segment covering 147-156 (SNASTINEGA) has biased composition (polar residues). A compositionally biased stretch (low complexity) spans 183 to 192 (SDSSSVASSP). Residues 206–275 (CTDEAVLKRR…KWKRSLYEYC (70 aa)) are RNA-binding. The segment at 342–367 (MDESTLKASTNTDPSAPTDFSKMSSH) is disordered. The segment covering 347-356 (LKASTNTDPS) has biased composition (polar residues).

The protein belongs to the SLBP family. Post-translationally, ubiquitinated by the CBC(fem-1) (Cul2-ElonginB-ElonginC) E3 ubiquitin-protein ligase complex, leading to its degradation.

Its function is as follows. Involved in histone pre-mRNA 3' processing. Required for chromosome condensation, progression of cell death and morphogenesis. The chain is Histone RNA hairpin-binding protein (cdl-1) from Caenorhabditis elegans.